The chain runs to 189 residues: GTP cyclohydrolase 1 (189 aa).

Residues C79, H82, and C150 each contribute to the Zn(2+) site.

It belongs to the GTP cyclohydrolase I family. In terms of assembly, toroid-shaped homodecamer, composed of two pentamers of five dimers.

The enzyme catalyses GTP + H2O = 7,8-dihydroneopterin 3'-triphosphate + formate + H(+). Its pathway is cofactor biosynthesis; 7,8-dihydroneopterin triphosphate biosynthesis; 7,8-dihydroneopterin triphosphate from GTP: step 1/1. In Rickettsia massiliae (strain Mtu5), this protein is GTP cyclohydrolase 1.